A 302-amino-acid chain; its full sequence is Zinc import ATP-binding protein ZnuC (302 aa).

Positions 13 to 228 (VSLANAGVRR…PEYLKLFGRR (216 aa)) constitute an ABC transporter domain. 45–52 (GPNGSGKS) is a binding site for ATP.

This sequence belongs to the ABC transporter superfamily. Zinc importer (TC 3.A.1.15.5) family. In terms of assembly, the complex is composed of two ATP-binding proteins (ZnuC), two transmembrane proteins (ZnuB) and a solute-binding protein (ZnuA).

The protein localises to the cell inner membrane. The catalysed reaction is Zn(2+)(out) + ATP(in) + H2O(in) = Zn(2+)(in) + ADP(in) + phosphate(in) + H(+)(in). Part of the ABC transporter complex ZnuABC involved in zinc import. Responsible for energy coupling to the transport system. The polypeptide is Zinc import ATP-binding protein ZnuC (Rhizobium meliloti (strain 1021) (Ensifer meliloti)).